We begin with the raw amino-acid sequence, 60 residues long: Large ribosomal subunit protein bL32 (60 aa).

Positions 1–60 (MAVQQNKKSRSARDMRRSHDALSENALSVEKTTGEVHLRHHVSPEGVYRGRKVVDKGADE) are disordered. The segment covering 11–22 (SARDMRRSHDAL) has biased composition (basic and acidic residues).

This sequence belongs to the bacterial ribosomal protein bL32 family.

The protein is Large ribosomal subunit protein bL32 of Pseudomonas putida (strain ATCC 700007 / DSM 6899 / JCM 31910 / BCRC 17059 / LMG 24140 / F1).